The following is a 641-amino-acid chain: MLV-related proviral Env polyprotein (641 aa).

The N-terminal stretch at 1–32 (MEGPAFSKPLKDKINPWGPLIVLGILIRAGVS) is a signal peptide. Topologically, residues 33-581 (VQHDSPHQVF…FNRSPWFTTL (549 aa)) are extracellular. Asn43 and Asn58 each carry an N-linked (GlcNAc...) asparagine glycan. 2 cysteine pairs are disulfide-bonded: Cys109/Cys126 and Cys118/Cys131. Residues 256-281 (RPPQPPPPGAASIVPETAPPSQQPGT) form a disordered region. A glycan (N-linked (GlcNAc...) asparagine) is linked at Asn297. Disulfide bonds link Cys307-Cys310, Cys307-Cys534, Cys337-Cys391, Cys356-Cys368, Cys398-Cys411, and Cys526-Cys533. Positions 307–310 (CWLC) match the CXXC motif. Asn336 carries an N-linked (GlcNAc...) asparagine glycan. Asn369 is a glycosylation site (N-linked (GlcNAc...) asparagine). The interval 443-463 (VSLTLALLLGGLTMGGIAAGV) is fusion peptide. Coiled coils occupy residues 471-520 (VATK…LLFL) and 530-566 (KEEC…SGQG). The segment at 509–525 (LQNRRGLDLLFLKEGGL) is immunosuppression. Residues 526 to 534 (CAALKEECC) carry the CX6CC motif. The helical transmembrane segment at 582–602 (ISTIMGPLIILLLILLFGPCI) threads the bilayer. Cys601 carries S-palmitoyl cysteine lipidation. The Cytoplasmic segment spans residues 603 to 641 (LNRLVQFVKDRISVVQALVLTQQYHQLKSIDPEEVESRE). The YXXL motif; contains endocytosis signal motif lies at 626-629 (YHQL).

As to quaternary structure, the mature envelope protein (Env) consists of a trimer of SU-TM heterodimers attached by a labile interchain disulfide bond. In terms of processing, specific enzymatic cleavages in vivo yield mature proteins. Envelope glycoproteins are synthesized as an inactive precursor that is N-glycosylated and processed likely by host cell furin or by a furin-like protease in the Golgi to yield the mature SU and TM proteins. The cleavage site between SU and TM requires the minimal sequence [KR]-X-[KR]-R. The R-peptide is released from the C-terminus of the cytoplasmic tail of the TM protein upon particle formation as a result of proteolytic cleavage by the viral protease. Cleavage of this peptide is required for TM to become fusogenic. The CXXC motif is highly conserved across a broad range of retroviral envelope proteins. It is thought to participate in the formation of a labile disulfide bond possibly with the CX6CC motif present in the transmembrane protein. Isomerization of the intersubunit disulfide bond to an SU intrachain disulfide bond is thought to occur upon receptor recognition in order to allow membrane fusion. Post-translationally, the transmembrane protein is palmitoylated. In terms of processing, the R-peptide is palmitoylated.

It localises to the virion membrane. Its subcellular location is the cell membrane. The surface protein (SU) attaches the virus to the host cell by binding to its receptor. This interaction triggers the refolding of the transmembrane protein (TM) and is thought to activate its fusogenic potential by unmasking its fusion peptide. Fusion occurs at the host cell plasma membrane. Functionally, the transmembrane protein (TM) acts as a class I viral fusion protein. Under the current model, the protein has at least 3 conformational states: pre-fusion native state, pre-hairpin intermediate state, and post-fusion hairpin state. During viral and target cell membrane fusion, the coiled coil regions (heptad repeats) assume a trimer-of-hairpins structure, positioning the fusion peptide in close proximity to the C-terminal region of the ectodomain. The formation of this structure appears to drive apposition and subsequent fusion of viral and target cell membranes. Membranes fusion leads to delivery of the nucleocapsid into the cytoplasm. This Mus musculus (Mouse) protein is MLV-related proviral Env polyprotein.